The sequence spans 375 residues: Succinyl-diaminopimelate desuccinylase (375 aa).

Residue His-66 coordinates Zn(2+). Residue Asp-68 is part of the active site. Asp-99 contributes to the Zn(2+) binding site. Glu-133 (proton acceptor) is an active-site residue. Zn(2+) contacts are provided by Glu-134, Glu-162, and His-348.

The protein belongs to the peptidase M20A family. DapE subfamily. In terms of assembly, homodimer. It depends on Zn(2+) as a cofactor. The cofactor is Co(2+).

The catalysed reaction is N-succinyl-(2S,6S)-2,6-diaminopimelate + H2O = (2S,6S)-2,6-diaminopimelate + succinate. The protein operates within amino-acid biosynthesis; L-lysine biosynthesis via DAP pathway; LL-2,6-diaminopimelate from (S)-tetrahydrodipicolinate (succinylase route): step 3/3. Its function is as follows. Catalyzes the hydrolysis of N-succinyl-L,L-diaminopimelic acid (SDAP), forming succinate and LL-2,6-diaminopimelate (DAP), an intermediate involved in the bacterial biosynthesis of lysine and meso-diaminopimelic acid, an essential component of bacterial cell walls. This chain is Succinyl-diaminopimelate desuccinylase, found in Yersinia pestis bv. Antiqua (strain Antiqua).